The following is a 330-amino-acid chain: Flotillin-like protein FloA (330 aa).

Helical transmembrane passes span 5 to 25 and 27 to 47; these read FLPL…FYYV and FLLW…QLFL.

Belongs to the flotillin-like FloA family. As to quaternary structure, homooligomerizes.

The protein localises to the cell membrane. It is found in the membrane raft. Found in functional membrane microdomains (FMM) that may be equivalent to eukaryotic membrane rafts. FMMs are highly dynamic and increase in number as cells age. Flotillins are thought to be important factors in membrane fluidity. This chain is Flotillin-like protein FloA, found in Parabacteroides distasonis (strain ATCC 8503 / DSM 20701 / CIP 104284 / JCM 5825 / NCTC 11152).